Reading from the N-terminus, the 143-residue chain is 3-dehydroquinate dehydratase (143 aa).

Tyrosine 22 functions as the Proton acceptor in the catalytic mechanism. Substrate-binding residues include asparagine 73, histidine 79, and aspartate 86. The active-site Proton donor is the histidine 99. Substrate contacts are provided by residues 100–101 (IS) and arginine 110.

The protein belongs to the type-II 3-dehydroquinase family. In terms of assembly, homododecamer.

It carries out the reaction 3-dehydroquinate = 3-dehydroshikimate + H2O. It participates in metabolic intermediate biosynthesis; chorismate biosynthesis; chorismate from D-erythrose 4-phosphate and phosphoenolpyruvate: step 3/7. Its function is as follows. Catalyzes a trans-dehydration via an enolate intermediate. The polypeptide is 3-dehydroquinate dehydratase (Salinispora arenicola (strain CNS-205)).